We begin with the raw amino-acid sequence, 309 residues long: Ribonuclease Z (309 aa).

Zn(2+) is bound by residues His63, His65, Asp67, His68, His141, Asp212, and His270. Residue Asp67 is the Proton acceptor of the active site.

This sequence belongs to the RNase Z family. As to quaternary structure, homodimer. Zn(2+) serves as cofactor.

The catalysed reaction is Endonucleolytic cleavage of RNA, removing extra 3' nucleotides from tRNA precursor, generating 3' termini of tRNAs. A 3'-hydroxy group is left at the tRNA terminus and a 5'-phosphoryl group is left at the trailer molecule.. In terms of biological role, zinc phosphodiesterase, which displays some tRNA 3'-processing endonuclease activity. Probably involved in tRNA maturation, by removing a 3'-trailer from precursor tRNA. The polypeptide is Ribonuclease Z (Limosilactobacillus reuteri (strain DSM 20016) (Lactobacillus reuteri)).